Reading from the N-terminus, the 879-residue chain is RNA-directed RNA polymerase (879 aa).

259 to 266 (GLPYVGRT) contacts GTP. In terms of domain architecture, RdRp catalytic spans 398-598 (LVYADNIYIV…DKERLFCSAA (201 aa)). Residues 846-879 (GAGTSRPMGMEAPTRSKNAVKMAKRRQRQKESRQ) are disordered.

As to quaternary structure, interacts with VP3 in the cytoplasm. Post-translationally, may exist in multiple phosphorylated forms.

The protein localises to the virion. The enzyme catalyses RNA(n) + a ribonucleoside 5'-triphosphate = RNA(n+1) + diphosphate. RNA-dependent RNA polymerase which is found both free and covalently attached to the genomic RNA. May also contain guanylyl and methyl transferase activities. The chain is RNA-directed RNA polymerase (VP1) from Gallus gallus (Chicken).